We begin with the raw amino-acid sequence, 908 residues long: DNA mismatch repair protein MutS (908 aa).

An ATP-binding site is contributed by 629–636 (GPNMAGKS). Positions 822–863 (ADEADGAPSEDPPSEDPPSGDGVRAKKGEADAVPDLEDSQAN) are disordered.

It belongs to the DNA mismatch repair MutS family.

In terms of biological role, this protein is involved in the repair of mismatches in DNA. It is possible that it carries out the mismatch recognition step. This protein has a weak ATPase activity. The chain is DNA mismatch repair protein MutS from Salinibacter ruber (strain DSM 13855 / M31).